A 159-amino-acid chain; its full sequence is MTENAQAAQPVFSIEKLYVKDLSLEVPNAPKIFLDRENPQINVQLRTEASNVDEGVFEVTLTVTVSSKLPEDRTVFLVEVAQAGIFQIRNIPEGDLEAVMMIGCPNILFPYARESVSDAITRAGFQPVVLAPVNFESLYQAQQQQQAAAAAQAGELPIQ.

It belongs to the SecB family. As to quaternary structure, homotetramer, a dimer of dimers. One homotetramer interacts with 1 SecA dimer.

It localises to the cytoplasm. In terms of biological role, one of the proteins required for the normal export of preproteins out of the cell cytoplasm. It is a molecular chaperone that binds to a subset of precursor proteins, maintaining them in a translocation-competent state. It also specifically binds to its receptor SecA. The sequence is that of Protein-export protein SecB from Aromatoleum aromaticum (strain DSM 19018 / LMG 30748 / EbN1) (Azoarcus sp. (strain EbN1)).